The chain runs to 399 residues: Lysosomal acid lipase/cholesteryl ester hydrolase (399 aa).

An N-terminal signal peptide occupies residues Met-1–Thr-27. Residues Ala-28 to Lys-76 constitute a propeptide, removed in mature form. N-linked (GlcNAc...) asparagine glycosylation is found at Asn-36, Asn-72, Asn-101, and Asn-161. Positions Pro-80 to Gly-380 constitute an AB hydrolase-1 domain. Ser-174 functions as the Charge relay system in the catalytic mechanism. 2 N-linked (GlcNAc...) asparagine glycosylation sites follow: Asn-273 and Asn-321. The active-site Charge relay system is the His-374.

This sequence belongs to the AB hydrolase superfamily. Lipase family. In terms of assembly, monomer. In terms of processing, glycosylation is not essential for catalytic activity. In terms of tissue distribution, most abundantly expressed in brain, lung, kidney and mammary gland, a moderate expression seen in placenta and expressed at low levels in the liver and heart.

The protein localises to the lysosome. It carries out the reaction a sterol ester + H2O = a sterol + a fatty acid + H(+). The enzyme catalyses cholesteryl (9Z-octadecenoate) + H2O = cholesterol + (9Z)-octadecenoate + H(+). It catalyses the reaction a triacylglycerol + H2O = a 1,2-diacylglycerol + a fatty acid + H(+). The catalysed reaction is 1,2-di-(9Z-octadecenoyl)-glycerol + (9Z)-octadecenoate + H(+) = 1,2,3-tri-(9Z-octadecenoyl)-glycerol + H2O. It carries out the reaction a 1,2-diacylglycerol + H2O = a 1-acylglycerol + a fatty acid + H(+). The enzyme catalyses 1,2-di-(9Z-octadecenoyl)-glycerol + H2O = 1-(9Z-octadecenoyl)-glycerol + (9Z)-octadecenoate + H(+). It catalyses the reaction a 1,3-diacylglycerol + H2O = a 1-acylglycerol + a fatty acid + H(+). The catalysed reaction is 1,3-di-(9Z-octadecenoyl)-glycerol + H2O = 1-(9Z-octadecenoyl)-glycerol + (9Z)-octadecenoate + H(+). In terms of biological role, catalyzes the deacylation of cholesteryl ester core lipids of endocytosed low density lipoproteins to generate free fatty acids and cholesterol. Hydrolyzes triglycerides (1,2,3-triacylglycerol) and diglycerides (such as 1,2-diacylglycerol and 1,3-diacylglycerol) with preference for the acyl moieties at the sn-1 or sn-3 positions. This chain is Lysosomal acid lipase/cholesteryl ester hydrolase (LIPA), found in Homo sapiens (Human).